Reading from the N-terminus, the 498-residue chain is ATP synthase subunit beta, chloroplastic (498 aa).

172-179 (GGAGVGKT) is a binding site for ATP.

This sequence belongs to the ATPase alpha/beta chains family. In terms of assembly, F-type ATPases have 2 components, CF(1) - the catalytic core - and CF(0) - the membrane proton channel. CF(1) has five subunits: alpha(3), beta(3), gamma(1), delta(1), epsilon(1). CF(0) has four main subunits: a(1), b(1), b'(1) and c(9-12).

The protein resides in the plastid. It is found in the chloroplast thylakoid membrane. It catalyses the reaction ATP + H2O + 4 H(+)(in) = ADP + phosphate + 5 H(+)(out). Functionally, produces ATP from ADP in the presence of a proton gradient across the membrane. The catalytic sites are hosted primarily by the beta subunits. The polypeptide is ATP synthase subunit beta, chloroplastic (Magnolia tripetala (Umbrella-tree)).